The chain runs to 332 residues: Cilia- and flagella-associated protein 119 (332 aa).

Over residues 1 to 10 the composition is skewed to polar residues; sequence MITPRSSQSL. 3 disordered regions span residues 1–70, 246–271, and 308–332; these read MITP…ANLF, EDEEATVEQAATPQEEEPEAVTEAEQ, and RLSNRLAALERPYQTPPSKGKSKAK. The span at 14-30 shows a compositional bias: basic and acidic residues; the sequence is VQTELEHSPKLQEEPDR. Positions 49 to 58 are enriched in polar residues; that stretch reads ESPAEATSSP. Residues 287–308 adopt a coiled-coil conformation; that stretch reads LNKELRQLQQLVEERLKESEER.

In terms of tissue distribution, specifically expressed in testis (at protein level).

Its subcellular location is the cell projection. The protein localises to the cilium. It localises to the flagellum. It is found in the cytoplasmic vesicle. The protein resides in the secretory vesicle. Its subcellular location is the acrosome. The protein localises to the cytoplasm. This is Cilia- and flagella-associated protein 119 from Rattus norvegicus (Rat).